Reading from the N-terminus, the 249-residue chain is Aspartate/glutamate leucyltransferase (249 aa).

It belongs to the R-transferase family. Bpt subfamily.

Its subcellular location is the cytoplasm. It catalyses the reaction N-terminal L-glutamyl-[protein] + L-leucyl-tRNA(Leu) = N-terminal L-leucyl-L-glutamyl-[protein] + tRNA(Leu) + H(+). The enzyme catalyses N-terminal L-aspartyl-[protein] + L-leucyl-tRNA(Leu) = N-terminal L-leucyl-L-aspartyl-[protein] + tRNA(Leu) + H(+). Functions in the N-end rule pathway of protein degradation where it conjugates Leu from its aminoacyl-tRNA to the N-termini of proteins containing an N-terminal aspartate or glutamate. This chain is Aspartate/glutamate leucyltransferase, found in Brucella suis (strain ATCC 23445 / NCTC 10510).